The sequence spans 486 residues: Chromosomal replication initiator protein DnaA (486 aa).

The interval 1-79 (MEKSKNIWSL…GYNNIVIVFT (79 aa)) is domain I, interacts with DnaA modulators. The segment at 79–141 (TNQPPKTHSN…EEEPTNFKNP (63 aa)) is domain II. The tract at residues 142-358 (FLKKRYTFEN…AAVTKLKAYI (217 aa)) is domain III, AAA+ region. 4 residues coordinate ATP: Gly186, Gly188, Lys189, and Thr190. Residues 359–486 (DLDNIEIDIE…TELMNKIKKN (128 aa)) form a domain IV, binds dsDNA region.

Belongs to the DnaA family. As to quaternary structure, oligomerizes as a right-handed, spiral filament on DNA at oriC.

It is found in the cytoplasm. Plays an essential role in the initiation and regulation of chromosomal replication. ATP-DnaA binds to the origin of replication (oriC) to initiate formation of the DNA replication initiation complex once per cell cycle. Binds the DnaA box (a 9 base pair repeat at the origin) and separates the double-stranded (ds)DNA. Forms a right-handed helical filament on oriC DNA; dsDNA binds to the exterior of the filament while single-stranded (ss)DNA is stabiized in the filament's interior. The ATP-DnaA-oriC complex binds and stabilizes one strand of the AT-rich DNA unwinding element (DUE), permitting loading of DNA polymerase. After initiation quickly degrades to an ADP-DnaA complex that is not apt for DNA replication. Binds acidic phospholipids. In terms of biological role, binds to the bpuR promoter, possibly at 5'-TTTTTAAA-3'. This is Chromosomal replication initiator protein DnaA from Borreliella burgdorferi (strain ATCC 35210 / DSM 4680 / CIP 102532 / B31) (Borrelia burgdorferi).